The sequence spans 166 residues: Cytochrome c-550 2 (166 aa).

Residues 1-32 (MFSRQFGRLATLALALAVAGCAGGEQSTTAEA) form the signal peptide. 3 residues coordinate heme c: Cys71, Cys74, and His75.

Belongs to the cytochrome c family. PsbV subfamily. The cofactor is heme c.

The protein localises to the cell inner membrane. Functionally, probable low-potential cytochrome c, might function in photosystem II (PSII). The protein is Cytochrome c-550 2 (psbV2) of Gloeobacter violaceus (strain ATCC 29082 / PCC 7421).